Reading from the N-terminus, the 248-residue chain is MSFVVIIPARYASTRLPGKPLVDINGKPMIVHVLERARESGAERIIVATDHEDVARAVEAAGGEVCMTRADHQSGTERLAEVVEKCAFSDDTVIVNVQGDEPMIPATIIRQVADNLAQRQVGMATLAVPIHNAEEAFNPNAVKVVLDAEGYALYFSRATIPWDRDRFAEGLETVGDNFLRHLGIYGYRAGFIRRYVNWQPSPLEHIEMLEQLRVLWYGEKIHVAVAQEVPGTGVDTPEDLERVRAEMR.

The protein belongs to the KdsB family.

Its subcellular location is the cytoplasm. It carries out the reaction 3-deoxy-alpha-D-manno-oct-2-ulosonate + CTP = CMP-3-deoxy-beta-D-manno-octulosonate + diphosphate. It participates in nucleotide-sugar biosynthesis; CMP-3-deoxy-D-manno-octulosonate biosynthesis; CMP-3-deoxy-D-manno-octulosonate from 3-deoxy-D-manno-octulosonate and CTP: step 1/1. Its pathway is bacterial outer membrane biogenesis; lipopolysaccharide biosynthesis. Functionally, activates KDO (a required 8-carbon sugar) for incorporation into bacterial lipopolysaccharide in Gram-negative bacteria. The sequence is that of 3-deoxy-manno-octulosonate cytidylyltransferase from Escherichia coli (strain K12 / MC4100 / BW2952).